The primary structure comprises 953 residues: Scaffold attachment factor B2 (953 aa).

The segment at 1 to 29 (MAETLPGSGDSGPGTASLGPGVAETGTRR) is disordered. Residue alanine 2 is modified to N-acetylalanine. The SAP domain occupies 30-64 (LSELRVIDLRAELKKRNLDTGGNKSVLMERLKKAV). Position 54 is a phosphoserine (serine 54). Lysine 65 is covalently cross-linked (Glycyl lysine isopeptide (Lys-Gly) (interchain with G-Cter in SUMO1); alternate). Lysine 65 is covalently cross-linked (Glycyl lysine isopeptide (Lys-Gly) (interchain with G-Cter in SUMO2); alternate). The disordered stretch occupies residues 91–114 (KGLKMEEEGTEDNGLEDDSRDGQE). Lysine 94 participates in a covalent cross-link: Glycyl lysine isopeptide (Lys-Gly) (interchain with G-Cter in SUMO2). Positions 98-114 (EGTEDNGLEDDSRDGQE) are enriched in acidic residues. A phosphoserine mark is found at serine 109 and serine 158. Residues lysine 188 and lysine 199 each participate in a glycyl lysine isopeptide (Lys-Gly) (interchain with G-Cter in SUMO2) cross-link. Threonine 201 carries the post-translational modification Phosphothreonine. Residue serine 207 is modified to Phosphoserine. Residues 219-404 (ILGETCKSEP…KDEKGRVGSG (186 aa)) form a disordered region. Residues 224–233 (CKSEPVKEES) show a composition bias toward basic and acidic residues. A Glycyl lysine isopeptide (Lys-Gly) (interchain with G-Cter in SUMO) cross-link involves residue lysine 230. The span at 274–285 (SESTAHAQSSKA) shows a compositional bias: polar residues. Positions 292-308 (VKREPAEQPGDGERTDC) are enriched in basic and acidic residues. Lysine 293 is covalently cross-linked (Glycyl lysine isopeptide (Lys-Gly) (interchain with G-Cter in SUMO)). The segment covering 318-329 (EQSSAASELAEA) has biased composition (low complexity). Basic and acidic residues predominate over residues 345–358 (EARDSKEDGRKFDF). Residues 370–382 (ESSTSEGADQKMS) are compositionally biased toward polar residues. Glycyl lysine isopeptide (Lys-Gly) (interchain with G-Cter in SUMO2) cross-links involve residues lysine 380, lysine 385, lysine 388, lysine 391, and lysine 395. The span at 383-400 (SFKEEKDIKPIIKDEKGR) shows a compositional bias: basic and acidic residues. In terms of domain architecture, RRM spans 407–485 (RNLWVSGLSS…RMISVEKAKN (79 aa)). 2 positions are modified to phosphoserine: serine 507 and serine 513. Residues lysine 517, lysine 524, lysine 525, lysine 541, lysine 542, and lysine 551 each participate in a glycyl lysine isopeptide (Lys-Gly) (interchain with G-Cter in SUMO2) cross-link. Positions 525–551 (KEEKIEKKEEKKPEDIKKEEKDQDELK) are enriched in basic and acidic residues. Disordered stretches follow at residues 525–665 (KEEK…RLQR) and 684–953 (RERL…TRRY). Positions 555–564 (TNRSRVTKSG) are enriched in polar residues. Residues 567–579 (GMERTVVMDKSKG) show a composition bias toward basic and acidic residues. Glycyl lysine isopeptide (Lys-Gly) (interchain with G-Cter in SUMO2) cross-links involve residues lysine 578, lysine 586, and lysine 608. Composition is skewed to basic and acidic residues over residues 590–665 (RSKE…RLQR) and 684–820 (RERL…DSRD). The interval 600–953 (DRKSESKEKR…PPYPHFTRRY (354 aa)) is interaction with SAFB1. Lysine 616 is covalently cross-linked (Glycyl lysine isopeptide (Lys-Gly) (interchain with G-Cter in SUMO2); alternate). Lysine 616 bears the N6-acetyllysine; alternate mark. Residues 713-730 (RRQQEQLRYEQERRPGRR) carry the Nuclear localization signal motif. Residues serine 787 and serine 832 each carry the phosphoserine modification. A compositionally biased stretch (basic and acidic residues) spans 843 to 859 (GGRDWGEHNQRLEEHQA). A compositionally biased stretch (gly residues) spans 881 to 890 (GERGLSGPSG). At serine 886 the chain carries Phosphoserine. Omega-N-methylarginine occurs at positions 897 and 903. A compositionally biased stretch (gly residues) spans 899-927 (GVAGRGGFAQGGHSQGHVVPGGGLEGGGV).

In terms of assembly, interacts with SAFB/SAFB1 and SCAM1. Interacts with isoform 2 SRPK1 and inhibits its activity. Expressed at high levels in the CNS and at low levels in the liver. Expressed in a wide number of breast cancer cell lines.

It localises to the cytoplasm. The protein localises to the nucleus. Functionally, binds to scaffold/matrix attachment region (S/MAR) DNA. Can function as an estrogen receptor corepressor and can also inhibit cell proliferation. This Homo sapiens (Human) protein is Scaffold attachment factor B2 (SAFB2).